The chain runs to 142 residues: 3-hydroxyacyl-[acyl-carrier-protein] dehydratase FabZ (142 aa).

The active site involves histidine 48.

This sequence belongs to the thioester dehydratase family. FabZ subfamily.

The protein resides in the cytoplasm. It carries out the reaction a (3R)-hydroxyacyl-[ACP] = a (2E)-enoyl-[ACP] + H2O. In terms of biological role, involved in unsaturated fatty acids biosynthesis. Catalyzes the dehydration of short chain beta-hydroxyacyl-ACPs and long chain saturated and unsaturated beta-hydroxyacyl-ACPs. The sequence is that of 3-hydroxyacyl-[acyl-carrier-protein] dehydratase FabZ from Natranaerobius thermophilus (strain ATCC BAA-1301 / DSM 18059 / JW/NM-WN-LF).